The sequence spans 296 residues: Cation-efflux pump FieF (296 aa).

At 1–18 (MTQTSQYDFWVKLASRAS) the chain is on the cytoplasmic side. Residues 19–32 (VATALTLITIKLLA) form a helical membrane-spanning segment. Topologically, residues 33–43 (WLYSGSASMLA) are periplasmic. The helical transmembrane segment at 44–60 (SLTDSFADTLASIINFI) threads the bilayer. Asp-47, Asp-51, Asp-70, His-73, and His-77 together coordinate Zn(2+). At 61–83 (AIRYAIVPADHDHRYGHGKAEPL) the chain is on the cytoplasmic side. Residues 84 to 105 (AALAQSAFIMGSAFLLLFYGGE) form a helical membrane-spanning segment. Residues 106 to 119 (RLLNPSPVENATLG) are Periplasmic-facing. Residues 120–138 (VVVSVVAIVLTLALVLLQK) traverse the membrane as a helical segment. Topologically, residues 139-145 (RALAATN) are cytoplasmic. Residues 146 to 160 (STVVEADSLHYKSDL) form a helical membrane-spanning segment. Residues His-155 and Asp-159 each coordinate Zn(2+). Residues 161 to 180 (FLNAAVLLALVLSQYGWWWA) lie on the Periplasmic side of the membrane. The chain crosses the membrane as a helical span at residues 181 to 200 (DGLFAVLIACYIGQQAFDLG). Topologically, residues 201–296 (YRSIQALLDR…DPVQVEPTTQ (96 aa)) are cytoplasmic. Positions 234, 235, 250, 263, 285, and 287 each coordinate Zn(2+).

It belongs to the cation diffusion facilitator (CDF) transporter (TC 2.A.4) family. FieF subfamily. As to quaternary structure, homodimer. The subunits are held together in a parallel orientation through zinc binding at the interface of the cytoplasmic domains.

It localises to the cell inner membrane. It carries out the reaction Zn(2+)(in) + H(+)(out) = Zn(2+)(out) + H(+)(in). The catalysed reaction is Cd(2+)(in) + H(+)(out) = Cd(2+)(out) + H(+)(in). It catalyses the reaction Fe(2+)(in) + H(+)(out) = Fe(2+)(out) + H(+)(in). Its activity is regulated as follows. Cytoplasmic zinc binding may trigger movements of two electrically repulsive cytoplasmic domains and reorient transmembrane helices, thereby modulating coordination geometry of the active site for zinc transport. It may modulate activity in response to cytoplasmic metal fluctuations. In terms of biological role, divalent metal cation transporter which exports Zn(2+), Cd(2+) and possibly Fe(2+). Zn(2+)/H(+) antiporter capable of using the proton motive force to remove Zn(2+) from the cytoplasm. May be involved in zinc and iron detoxification by efflux. This chain is Cation-efflux pump FieF, found in Shewanella oneidensis (strain ATCC 700550 / JCM 31522 / CIP 106686 / LMG 19005 / NCIMB 14063 / MR-1).